The chain runs to 296 residues: Nicotinate dehydrogenase FAD-subunit (296 aa).

The 179-residue stretch at 1–179 (MKDFEFFAPK…TEVIIDRPDA (179 aa)) folds into the FAD-binding PCMH-type domain. FAD is bound by residues 29 to 36 (IIAGGTDL), glycine 101, 110 to 114 (TIGGN), aspartate 123, arginine 160, methionine 169, and lysine 187.

In terms of assembly, heterooctamer of NDHM, NDHL, NDHS and NDHF. Dimer of heterotetramers. Requires FAD as cofactor.

It carries out the reaction nicotinate + NADP(+) + H2O = 6-hydroxynicotinate + NADPH + H(+). It participates in cofactor degradation; nicotinate degradation; 6-hydroxynicotinate from nicotinate: step 1/1. Its activity is regulated as follows. Reversibly inactivated by selenide and sulfide. Not inhibited by cyanide. In terms of biological role, catalyzes the hydroxylation of nicotinate to 6-hydroxynicotinate. Also active against 2-pyrazinecarboxylic acid, but inactive against other nicotinate analogs. The polypeptide is Nicotinate dehydrogenase FAD-subunit (ndhF) (Eubacterium barkeri (Clostridium barkeri)).